Here is a 205-residue protein sequence, read N- to C-terminus: Large ribosomal subunit protein bL21m (205 aa).

The N-terminal 39 residues, 1 to 39, are a transit peptide targeting the mitochondrion; that stretch reads MAASSLTVTLGRLASACSHSILRPSGPGAASLWSASRRF.

It belongs to the bacterial ribosomal protein bL21 family. In terms of assembly, component of the mitochondrial large ribosomal subunit (mt-LSU). Mature mammalian 55S mitochondrial ribosomes consist of a small (28S) and a large (39S) subunit. The 28S small subunit contains a 12S ribosomal RNA (12S mt-rRNA) and 30 different proteins. The 39S large subunit contains a 16S rRNA (16S mt-rRNA), a copy of mitochondrial valine transfer RNA (mt-tRNA(Val)), which plays an integral structural role, and 52 different proteins.

It localises to the mitochondrion. This Homo sapiens (Human) protein is Large ribosomal subunit protein bL21m (MRPL21).